We begin with the raw amino-acid sequence, 390 residues long: MGQRLSGGRSCLDVPGRLLPQPPPPPPPVRRKLALLFAMLCVWLYMFLYSCAGSCAAAPGLLLLGSGSRAAHDPPALATAPDGTPPRLPFRAPPATPLASGKEMAEGAASPEEQSPEVPDSPSPISSFFSGSGSKQLPQAIIIGVKKGGTRALLEFLRVHPDVRAVGAEPHFFDRSYDKGLAWYRDLMPRTLDGQITMEKTPSYFVTREAPARISAMSKDTKLIVVVRDPVTRAISDYTQTLSKRPDIPTFESLTFKNRTAGLIDTSWSAIQIGIYAKHLEHWLRHFPIRQMLFVSGERLISDPAGELGRVQDFLGLKRIITDKHFYFNKTKGFPCLKKAEGSSRPHCLGKTKGRTHPEIDREVVRRLREFYRPFNLKFYQMTGHDFGWD.

Residues 1–25 (MGQRLSGGRSCLDVPGRLLPQPPPP) are disordered. The Cytoplasmic segment spans residues 1–32 (MGQRLSGGRSCLDVPGRLLPQPPPPPPPVRRK). Residues 33–53 (LALLFAMLCVWLYMFLYSCAG) form a helical; Signal-anchor for type II membrane protein membrane-spanning segment. The Lumenal segment spans residues 54–390 (SCAAAPGLLL…QMTGHDFGWD (337 aa)). Residues 74–133 (PPALATAPDGTPPRLPFRAPPATPLASGKEMAEGAASPEEQSPEVPDSPSPISSFFSGSG) form a disordered region. The span at 83–96 (GTPPRLPFRAPPAT) shows a compositional bias: pro residues. Residues 123–133 (SPISSFFSGSG) are compositionally biased toward low complexity. Residue 147–151 (KGGTR) participates in 3'-phosphoadenylyl sulfate binding. Substrate contacts are provided by residues 169-175 (EPHFFDR) and 200-203 (KTPS). 3'-phosphoadenylyl sulfate is bound by residues Arg228 and Ser236. N-linked (GlcNAc...) asparagine glycosylation occurs at Asn258. 268–269 (WS) serves as a coordination point for substrate. Asn329 carries N-linked (GlcNAc...) asparagine glycosylation. The cysteines at positions 336 and 348 are disulfide-linked. 353-357 (KGRTH) contacts 3'-phosphoadenylyl sulfate.

This sequence belongs to the sulfotransferase 1 family. In terms of tissue distribution, ubiquitous. Most abundant in liver and placenta, followed by heart and kidney.

Its subcellular location is the golgi apparatus membrane. It catalyses the reaction alpha-D-glucosaminyl-[heparan sulfate](n) + 3'-phosphoadenylyl sulfate = 3-sulfo-alpha-D-glucosaminyl-[heparan sulfate](n) + adenosine 3',5'-bisphosphate + H(+). Its function is as follows. Sulfotransferase that utilizes 3'-phospho-5'-adenylyl sulfate (PAPS) to catalyze the transfer of a sulfo group to an N-unsubstituted glucosamine linked to a 2-O-sulfo iduronic acid unit on heparan sulfate. Catalyzes the O-sulfation of glucosamine in IdoUA2S-GlcNS and also in IdoUA2S-GlcNH2. The substrate-specific O-sulfation generates an enzyme-modified heparan sulfate which acts as a binding receptor to Herpes simplex virus-1 (HSV-1) and permits its entry. Unlike HS3ST1/3-OST-1, does not convert non-anticoagulant heparan sulfate to anticoagulant heparan sulfate. This is Heparan sulfate glucosamine 3-O-sulfotransferase 3B1 (HS3ST3B1) from Homo sapiens (Human).